A 122-amino-acid chain; its full sequence is Large ribosomal subunit protein uL18 (122 aa).

Positions 1 to 19 (MSTLSRKQKTQKRHKRLRR) are enriched in basic residues. Residues 1–26 (MSTLSRKQKTQKRHKRLRRNLSGTDQ) form a disordered region.

This sequence belongs to the universal ribosomal protein uL18 family. As to quaternary structure, part of the 50S ribosomal subunit; part of the 5S rRNA/L5/L18/L25 subcomplex. Contacts the 5S and 23S rRNAs.

Functionally, this is one of the proteins that bind and probably mediate the attachment of the 5S RNA into the large ribosomal subunit, where it forms part of the central protuberance. The sequence is that of Large ribosomal subunit protein uL18 from Prochlorococcus marinus (strain SARG / CCMP1375 / SS120).